The primary structure comprises 194 residues: ATP-dependent Clp protease proteolytic subunit (194 aa).

The active-site Nucleophile is serine 98. Histidine 123 is a catalytic residue.

It belongs to the peptidase S14 family. In terms of assembly, fourteen ClpP subunits assemble into 2 heptameric rings which stack back to back to give a disk-like structure with a central cavity, resembling the structure of eukaryotic proteasomes.

The protein localises to the cytoplasm. It catalyses the reaction Hydrolysis of proteins to small peptides in the presence of ATP and magnesium. alpha-casein is the usual test substrate. In the absence of ATP, only oligopeptides shorter than five residues are hydrolyzed (such as succinyl-Leu-Tyr-|-NHMec, and Leu-Tyr-Leu-|-Tyr-Trp, in which cleavage of the -Tyr-|-Leu- and -Tyr-|-Trp bonds also occurs).. In terms of biological role, cleaves peptides in various proteins in a process that requires ATP hydrolysis. Has a chymotrypsin-like activity. Plays a major role in the degradation of misfolded proteins. This chain is ATP-dependent Clp protease proteolytic subunit, found in Ruminiclostridium cellulolyticum (strain ATCC 35319 / DSM 5812 / JCM 6584 / H10) (Clostridium cellulolyticum).